The following is an 823-amino-acid chain: Putative E3 ubiquitin-protein ligase RF4 (823 aa).

Disordered regions lie at residues 24–72, 224–291, and 432–464; these read TVSP…NGSV, SKLS…CSGS, and ESVT…SEEK. Residues 61 to 72 show a composition bias toward polar residues; sequence KPQNHLSGNGSV. Residues 224–240 are compositionally biased toward low complexity; the sequence is SKLSDSESLGAESNPPK. Residues 267–282 show a composition bias toward polar residues; the sequence is FPNTPNSKKTQSSGTT. Over residues 453–464 the composition is skewed to basic and acidic residues; that stretch reads SEKKSGSESEEK. Positions 536–738 form a coiled coil; it reads ELKALRKERE…ELKLKSDYSR (203 aa). Residues 768 to 808 form an RING-type zinc finger; the sequence is CVMCLSEEMSVIFLPCAHQVLCFKCNQLHEKEGMMDCPSCR.

The protein belongs to the RING-type zinc finger family.

The catalysed reaction is S-ubiquitinyl-[E2 ubiquitin-conjugating enzyme]-L-cysteine + [acceptor protein]-L-lysine = [E2 ubiquitin-conjugating enzyme]-L-cysteine + N(6)-ubiquitinyl-[acceptor protein]-L-lysine.. The protein operates within protein modification; protein ubiquitination. This Arabidopsis thaliana (Mouse-ear cress) protein is Putative E3 ubiquitin-protein ligase RF4 (RF4).